We begin with the raw amino-acid sequence, 154 residues long: Myoglobin (154 aa).

The region spanning glycine 2–lysine 148 is the Globin domain. Nitrite is bound at residue histidine 65. Histidine 65 provides a ligand contact to O2. Residue histidine 94 participates in heme b binding.

Belongs to the globin family. In terms of assembly, monomeric.

The protein resides in the cytoplasm. Its subcellular location is the sarcoplasm. The enzyme catalyses Fe(III)-heme b-[protein] + nitric oxide + H2O = Fe(II)-heme b-[protein] + nitrite + 2 H(+). The catalysed reaction is H2O2 + AH2 = A + 2 H2O. Monomeric heme protein which primary function is to store oxygen and facilitate its diffusion within muscle tissues. Reversibly binds oxygen through a pentacoordinated heme iron and enables its timely and efficient release as needed during periods of heightened demand. Depending on the oxidative conditions of tissues and cells, and in addition to its ability to bind oxygen, it also has a nitrite reductase activity whereby it regulates the production of bioactive nitric oxide. Under stress conditions, like hypoxia and anoxia, it also protects cells against reactive oxygen species thanks to its pseudoperoxidase activity. This is Myoglobin (MB) from Anas poecilorhyncha (Indian spot-billed duck).